A 460-amino-acid chain; its full sequence is Diguanylate cyclase DosC (460 aa).

His98 contributes to the heme binding site. Positions 325–458 constitute a GGDEF domain; it reads TPLSVLIIDV…GRNRVELWKA (134 aa). Asp333 provides a ligand contact to Mg(2+). Asn341 and Asp350 together coordinate substrate. Asp376 is a Mg(2+) binding site. Catalysis depends on Asp376, which acts as the Proton acceptor.

Requires heme as cofactor. It depends on Mg(2+) as a cofactor.

The enzyme catalyses 2 GTP = 3',3'-c-di-GMP + 2 diphosphate. It participates in purine metabolism; 3',5'-cyclic di-GMP biosynthesis. Globin-coupled heme-based oxygen sensor protein displaying diguanylate cyclase (DGC) activity in response to oxygen availability. Thus, catalyzes the synthesis of cyclic diguanylate (c-di-GMP) via the condensation of 2 GTP molecules. Cyclic-di-GMP is a second messenger which controls cell surface-associated traits in bacteria. The polypeptide is Diguanylate cyclase DosC (dosC) (Escherichia coli O157:H7).